The chain runs to 305 residues: Aspartate carbamoyltransferase catalytic subunit (305 aa).

Residues Arg54 and Thr55 each coordinate carbamoyl phosphate. Lys82 provides a ligand contact to L-aspartate. 3 residues coordinate carbamoyl phosphate: Arg104, His132, and Gln135. Arg165 and Arg218 together coordinate L-aspartate. Carbamoyl phosphate-binding residues include Gly259 and Pro260.

Belongs to the aspartate/ornithine carbamoyltransferase superfamily. ATCase family. As to quaternary structure, heterododecamer (2C3:3R2) of six catalytic PyrB chains organized as two trimers (C3), and six regulatory PyrI chains organized as three dimers (R2).

The enzyme catalyses carbamoyl phosphate + L-aspartate = N-carbamoyl-L-aspartate + phosphate + H(+). The protein operates within pyrimidine metabolism; UMP biosynthesis via de novo pathway; (S)-dihydroorotate from bicarbonate: step 2/3. In terms of biological role, catalyzes the condensation of carbamoyl phosphate and aspartate to form carbamoyl aspartate and inorganic phosphate, the committed step in the de novo pyrimidine nucleotide biosynthesis pathway. The protein is Aspartate carbamoyltransferase catalytic subunit of Caldicellulosiruptor bescii (strain ATCC BAA-1888 / DSM 6725 / KCTC 15123 / Z-1320) (Anaerocellum thermophilum).